The chain runs to 273 residues: Dermonecrotic toxin LarSicTox-alphaIB1aii (273 aa).

Residue H5 is part of the active site. The Mg(2+) site is built by E25 and D27. The Nucleophile role is filled by H41. Intrachain disulfides connect C45-C51 and C47-C190. Mg(2+) is bound at residue D85. N250 carries N-linked (GlcNAc...) asparagine glycosylation.

This sequence belongs to the arthropod phospholipase D family. Class II subfamily. The cofactor is Mg(2+). In terms of tissue distribution, expressed by the venom gland.

It localises to the secreted. It carries out the reaction an N-(acyl)-sphingosylphosphocholine = an N-(acyl)-sphingosyl-1,3-cyclic phosphate + choline. It catalyses the reaction an N-(acyl)-sphingosylphosphoethanolamine = an N-(acyl)-sphingosyl-1,3-cyclic phosphate + ethanolamine. The catalysed reaction is a 1-acyl-sn-glycero-3-phosphocholine = a 1-acyl-sn-glycero-2,3-cyclic phosphate + choline. The enzyme catalyses a 1-acyl-sn-glycero-3-phosphoethanolamine = a 1-acyl-sn-glycero-2,3-cyclic phosphate + ethanolamine. In terms of biological role, dermonecrotic toxins cleave the phosphodiester linkage between the phosphate and headgroup of certain phospholipids (sphingolipid and lysolipid substrates), forming an alcohol (often choline) and a cyclic phosphate. This toxin acts on sphingomyelin (SM). It may also act on ceramide phosphoethanolamine (CPE), lysophosphatidylcholine (LPC) and lysophosphatidylethanolamine (LPE), but not on lysophosphatidylserine (LPS), and lysophosphatidylglycerol (LPG). It acts by transphosphatidylation, releasing exclusively cyclic phosphate products as second products. Induces dermonecrosis, hemolysis, increased vascular permeability, edema, inflammatory response, and platelet aggregation. This chain is Dermonecrotic toxin LarSicTox-alphaIB1aii, found in Loxosceles arizonica (Arizona brown spider).